The chain runs to 574 residues: Ribonuclease Y (574 aa).

The helical transmembrane segment at 1-21 (MSLLDLVLLLLVLGLGGVLLL) threads the bilayer. In terms of domain architecture, KH spans 264–327 (AVTVVPIPSD…EIARMALEEL (64 aa)). The 94-residue stretch at 390 to 483 (VLKHSIQVAH…VAAADALSAA (94 aa)) folds into the HD domain.

This sequence belongs to the RNase Y family.

Its subcellular location is the cell membrane. In terms of biological role, endoribonuclease that initiates mRNA decay. This chain is Ribonuclease Y, found in Thermus thermophilus (strain ATCC BAA-163 / DSM 7039 / HB27).